A 154-amino-acid chain; its full sequence is Transcriptional repressor NrdR (154 aa).

A zinc finger spans residues 3–34 (CPTCKYNGTRVVDSRPADDGNSIRRRRECEKC). Positions 49–139 (LIVVKKDGAR…VYRQFKDISV (91 aa)) constitute an ATP-cone domain.

Belongs to the NrdR family. Zn(2+) serves as cofactor.

Its function is as follows. Negatively regulates transcription of bacterial ribonucleotide reductase nrd genes and operons by binding to NrdR-boxes. This is Transcriptional repressor NrdR from Listeria innocua serovar 6a (strain ATCC BAA-680 / CLIP 11262).